A 292-amino-acid chain; its full sequence is Large ribosomal subunit protein bL19m (292 aa).

A disordered region spans residues 39 to 68 (GPGRRQITGPSEPGVFQPPPKPVIVDKRGP). Serine 77 carries the post-translational modification Phosphoserine.

Belongs to the bacterial ribosomal protein bL19 family. Component of the mitochondrial ribosome large subunit (39S) which comprises a 16S rRNA and about 50 distinct proteins.

It localises to the mitochondrion. The protein is Large ribosomal subunit protein bL19m (MRPL19) of Bos taurus (Bovine).